A 131-amino-acid chain; its full sequence is MAAPKLGFFEKIANLTGALYRHQHAQFPRRFAILKAVGKHELAPPRQADWPAIKADWAKVQSFIQTGGYKNLSIREGLVYTAVTLEVVFWFFVGEMIGRRYIFGYLVPADYVSKSTKKTVKEQEALAALEN.

This sequence belongs to the ATPase g subunit family. In terms of assembly, subunit of the F-type ATPase which has 2 components, CF(1) - the catalytic core - and CF(0) - the membrane proton channel.

Its subcellular location is the mitochondrion membrane. Functionally, mitochondrial membrane ATP synthase (F(1)F(0) ATP synthase or Complex V) produces ATP from ADP in the presence of a proton gradient across the membrane which is generated by electron transport complexes of the respiratory chain. F-type ATPases consist of two structural domains, F(1) - containing the extramembraneous catalytic core, and F(0) - containing the membrane proton channel, linked together by a central stalk and a peripheral stalk. During catalysis, ATP synthesis in the catalytic domain of F(1) is coupled via a rotary mechanism of the central stalk subunits to proton translocation. Part of the complex F(0) domain. Minor subunit located with subunit a in the membrane. The polypeptide is Probable ATP synthase subunit g 2, mitochondrial (Caenorhabditis elegans).